The sequence spans 213 residues: Orotate phosphoribosyltransferase (213 aa).

Residue K26 coordinates 5-phospho-alpha-D-ribose 1-diphosphate. Orotate is bound at residue 34 to 35 (FF). 5-phospho-alpha-D-ribose 1-diphosphate is bound by residues 72 to 73 (YK), R99, K100, K103, H105, and 124 to 132 (DDVITAGTA). 2 residues coordinate orotate: T128 and R156.

This sequence belongs to the purine/pyrimidine phosphoribosyltransferase family. PyrE subfamily. In terms of assembly, homodimer. Mg(2+) serves as cofactor.

The catalysed reaction is orotidine 5'-phosphate + diphosphate = orotate + 5-phospho-alpha-D-ribose 1-diphosphate. It functions in the pathway pyrimidine metabolism; UMP biosynthesis via de novo pathway; UMP from orotate: step 1/2. Functionally, catalyzes the transfer of a ribosyl phosphate group from 5-phosphoribose 1-diphosphate to orotate, leading to the formation of orotidine monophosphate (OMP). This is Orotate phosphoribosyltransferase from Pseudomonas syringae pv. tomato (strain ATCC BAA-871 / DC3000).